A 154-amino-acid polypeptide reads, in one-letter code: Transcriptional repressor NrdR (154 aa).

The segment at 3 to 34 is a zinc-finger region; the sequence is CPFCGAEDTAVADTRLNDEADVVRRRRKCNAC. An ATP-cone domain is found at 49 to 139; that stretch reads PQVVKKNGLR…VYRNFEDVDA (91 aa).

It belongs to the NrdR family. Requires Zn(2+) as cofactor.

Its function is as follows. Negatively regulates transcription of bacterial ribonucleotide reductase nrd genes and operons by binding to NrdR-boxes. In Dechloromonas aromatica (strain RCB), this protein is Transcriptional repressor NrdR.